The chain runs to 325 residues: Melanocortin receptor 5 (325 aa).

Residues 1–37 (MNSSFHLHFLDLGLNTTDGNLSGLSVQNASSLCEDMG) lie on the Extracellular side of the membrane. Asparagine 2, asparagine 15, asparagine 20, and asparagine 28 each carry an N-linked (GlcNAc...) asparagine glycan. The chain crosses the membrane as a helical span at residues 38 to 61 (IAVEVFLALGLISLLENILVIGAI). At 62–73 (VRNRNLHTPMYF) the chain is on the cytoplasmic side. Residues 74–97 (FVGSLAVADMLVSLSNSWETITIY) form a helical membrane-spanning segment. At 98–114 (LLTNKHLVMADASVRHL) the chain is on the extracellular side. A helical membrane pass occupies residues 115-138 (DNVFDSMICISVVASMCSLLAIAV). The Cytoplasmic portion of the chain corresponds to 139–155 (DRYVTIFCALRYQRIMT). The chain crosses the membrane as a helical span at residues 156 to 179 (GRRSGAIIGGIWAFCASCGTVFIV). Residues 180–186 (YYESTYV) lie on the Extracellular side of the membrane. A helical transmembrane segment spans residues 187–211 (VICLIAMFLTMLLLMASLYTHMFLL). Residues 212 to 239 (ARTHIRRIATLPGHSSVRQRTGVKGAIT) lie on the Cytoplasmic side of the membrane. The chain crosses the membrane as a helical span at residues 240–265 (LAMLLGVFIVCWAPFFLHLILMISCP). Residues 266 to 273 (HNLYCSCF) are Extracellular-facing. The chain crosses the membrane as a helical span at residues 274 to 297 (MSHFNMYLILIMCNSVIDPLIYAF). Over 298–325 (RSQEMRKTFKEIVCFQSFRTPCRFPSRY) the chain is Cytoplasmic. The S-palmitoyl cysteine moiety is linked to residue cysteine 311.

This sequence belongs to the G-protein coupled receptor 1 family.

It localises to the cell membrane. Its function is as follows. Receptor for MSH (alpha, beta and gamma) and ACTH. The activity of this receptor is mediated by G proteins which activate adenylate cyclase. This receptor is a possible mediator of the immunomodulation properties of melanocortins. The sequence is that of Melanocortin receptor 5 (MC5R) from Bos taurus (Bovine).